The chain runs to 1166 residues: DEAD-box ATP-dependent RNA helicase 42 (1166 aa).

2 stretches are compositionally biased toward basic and acidic residues: residues 1–12 (MEVEKSKYRSED) and 21–45 (DLKK…EKRR). A disordered region spans residues 1 to 460 (MEVEKSKYRS…NDDDPSLDED (460 aa)). Positions 14 to 95 (DVVEEEADLK…KDRVKRRSER (82 aa)) form a coiled coil. Over residues 59–70 (SEDDYDRDDDEE) the composition is skewed to acidic residues. Positions 80 to 95 (ERRRRDKDRVKRRSER) are enriched in basic residues. Acidic residues predominate over residues 101–110 (SEDDVEEEDE). The span at 111–206 (RDKRRVNEKE…RERERSREVG (96 aa)) shows a compositional bias: basic and acidic residues. The stretch at 130-302 (RGKDRKRDRE…KRKKEEAESE (173 aa)) forms a coiled coil. Ser210 is modified (phosphoserine). Residues 224–314 (EGGERKEKER…GDADGNEPKA (91 aa)) are compositionally biased toward basic and acidic residues. A Phosphoserine modification is found at Ser324. 2 stretches are compositionally biased toward basic and acidic residues: residues 344-357 (ETKP…KMVD) and 416-426 (MNGKESGDRPK). Residues 529–557 (KFWHQTGLTSKILDTMKKLNYEKPMPIQT) carry the Q motif motif. The Helicase ATP-binding domain occupies 560-738 (LPIIMSGRDC…RKVLNKPVEI (179 aa)). 573-580 (AKTGSGKT) is an ATP binding site. The DEAD box signature appears at 686-689 (DEAD). A Helicase C-terminal domain is found at 749–910 (DITQLVEVRP…PVPDDLKALA (162 aa)).

Belongs to the DEAD box helicase family. DDX46/PRP5 subfamily.

Its subcellular location is the nucleus. The enzyme catalyses ATP + H2O = ADP + phosphate + H(+). Functionally, helicase required for pre-mRNA splicing, cold-responsive gene regulation and cold tolerance. The protein is DEAD-box ATP-dependent RNA helicase 42 (RH42) of Arabidopsis thaliana (Mouse-ear cress).